The following is a 273-amino-acid chain: Rho GTPase-activating protein gacB (273 aa).

The Rho-GAP domain occupies 1–192 (MTDQTLRLEN…YLISHFNEIF (192 aa)).

It is found in the cytoplasm. Functionally, rho GTPase-activating protein involved in the signal transduction pathway. The chain is Rho GTPase-activating protein gacB (gacB) from Dictyostelium discoideum (Social amoeba).